The primary structure comprises 237 residues: MTKLSVNINKIATLRNARGGNVPDLLKVAADIQRFGGQGITIHPRPDERHIRYQDARDLKAIVTTEYNIEGNPQHNFIDLVLECKPDQVTLVPDAIGAITSSAGWDTIKNQEYLKEVIQEFQRNGIRTSIFVDPVLEMIEGAKKTGTDRIELYTEAFAHQYDLGNKNGIDPYVKAAELANELGLGINAGHDLSLDNIQFFKQNIPGLLEVSIGHALISEALYLGLDNVVNMYLKKLK.

Positions 7 and 18 each coordinate 3-amino-2-oxopropyl phosphate. His43 functions as the Proton acceptor in the catalytic mechanism. 1-deoxy-D-xylulose 5-phosphate contacts are provided by Arg45 and His50. Glu70 functions as the Proton acceptor in the catalytic mechanism. Thr100 provides a ligand contact to 1-deoxy-D-xylulose 5-phosphate. His190 (proton donor) is an active-site residue. Residues Asp191 and 213-214 (GH) each bind 3-amino-2-oxopropyl phosphate.

It belongs to the PNP synthase family. Homooctamer; tetramer of dimers.

The protein resides in the cytoplasm. It carries out the reaction 3-amino-2-oxopropyl phosphate + 1-deoxy-D-xylulose 5-phosphate = pyridoxine 5'-phosphate + phosphate + 2 H2O + H(+). It functions in the pathway cofactor biosynthesis; pyridoxine 5'-phosphate biosynthesis; pyridoxine 5'-phosphate from D-erythrose 4-phosphate: step 5/5. In terms of biological role, catalyzes the complicated ring closure reaction between the two acyclic compounds 1-deoxy-D-xylulose-5-phosphate (DXP) and 3-amino-2-oxopropyl phosphate (1-amino-acetone-3-phosphate or AAP) to form pyridoxine 5'-phosphate (PNP) and inorganic phosphate. This is Pyridoxine 5'-phosphate synthase from Flavobacterium johnsoniae (strain ATCC 17061 / DSM 2064 / JCM 8514 / BCRC 14874 / CCUG 350202 / NBRC 14942 / NCIMB 11054 / UW101) (Cytophaga johnsonae).